We begin with the raw amino-acid sequence, 174 residues long: UPF0340 protein SAR2202 (174 aa).

Belongs to the UPF0340 family.

The sequence is that of UPF0340 protein SAR2202 from Staphylococcus aureus (strain MRSA252).